A 176-amino-acid polypeptide reads, in one-letter code: PRL-1 phosphatase (176 aa).

Residues 13 to 166 (APALIEYKGM…YKPKARLKHK (154 aa)) form the Tyrosine-protein phosphatase domain. Cys-109 serves as the catalytic Phosphocysteine intermediate. Residue Cys-173 is modified to Cysteine methyl ester. Cys-173 carries S-farnesyl cysteine lipidation. Positions 174–176 (SVQ) are cleaved as a propeptide — removed in mature form.

This sequence belongs to the protein-tyrosine phosphatase family. Homotrimer. Interacts with uex, possibly at the plasma membrane. As to expression, expressed in the adult head (at protein level). Expressed in neurons in the antennal lobe and V-glomeruli (at protein level). Expressed in dorsocentral neurons (at protein level).

It localises to the cytoplasm. Its subcellular location is the cell membrane. It is found in the apicolateral cell membrane. The protein resides in the cell projection. The protein localises to the axon. It carries out the reaction O-phospho-L-tyrosyl-[protein] + H2O = L-tyrosyl-[protein] + phosphate. Functionally, probable phosphatase. Inhibits growth possibly by negatively regulating Src64B-induced growth. Regulates central nervous system circuit formation and stabilization of synapse-dense terminal arbors. In dorsocentral neurons, regulates synaptogenesis in terminal arbors via modulation of the insulin receptor pathway, likely upstream of Akt1, and via reduction of PtdIns(4,5)P2 (Phosphatidylinositol 4,5-bisphosphate) levels. In the nervous system, plays a protective role together with uex in response to olfactory carbon dioxide stimulation. This chain is PRL-1 phosphatase, found in Drosophila melanogaster (Fruit fly).